The primary structure comprises 310 residues: HPr kinase/phosphorylase (310 aa).

Active-site residues include His138 and Lys159. 153–160 lines the ATP pocket; that stretch reads GDSGIGKS. Mg(2+) is bound at residue Ser160. Catalysis depends on Asp177, which acts as the Proton acceptor; for phosphorylation activity. Proton donor; for dephosphorylation activity. The interval 201–210 is important for the catalytic mechanism of both phosphorylation and dephosphorylation; sequence LEIRGVGIID. Glu202 is a binding site for Mg(2+). Arg243 is a catalytic residue. The segment at 264–269 is important for the catalytic mechanism of dephosphorylation; it reads PVKTGR.

It belongs to the HPrK/P family. In terms of assembly, homohexamer. The cofactor is Mg(2+).

The enzyme catalyses [HPr protein]-L-serine + ATP = [HPr protein]-O-phospho-L-serine + ADP + H(+). It carries out the reaction [HPr protein]-O-phospho-L-serine + phosphate + H(+) = [HPr protein]-L-serine + diphosphate. Functionally, catalyzes the ATP- as well as the pyrophosphate-dependent phosphorylation of a specific serine residue in HPr, a phosphocarrier protein of the phosphoenolpyruvate-dependent sugar phosphotransferase system (PTS). HprK/P also catalyzes the pyrophosphate-producing, inorganic phosphate-dependent dephosphorylation (phosphorolysis) of seryl-phosphorylated HPr (P-Ser-HPr). The two antagonistic activities of HprK/P are regulated by several intracellular metabolites, which change their concentration in response to the absence or presence of rapidly metabolisable carbon sources (glucose, fructose, etc.) in the growth medium. Therefore, by controlling the phosphorylation state of HPr, HPrK/P is a sensor enzyme that plays a major role in the regulation of carbon metabolism and sugar transport: it mediates carbon catabolite repression (CCR), and regulates PTS-catalyzed carbohydrate uptake and inducer exclusion. This is HPr kinase/phosphorylase from Streptococcus uberis (strain ATCC BAA-854 / 0140J).